Consider the following 394-residue polypeptide: Endothelial cell-selective adhesion molecule (394 aa).

The signal sequence occupies residues 1–29 (MILPARTPETSLLRVLFLGLSTLAAFSLA). The Extracellular segment spans residues 30–251 (QMELHVPPGL…LDVMTGSKAA (222 aa)). The Ig-like V-type domain occupies 37 to 146 (PGLNKLEAVE…DGKNIGHSIK (110 aa)). N-linked (GlcNAc...) asparagine glycans are attached at residues Asn111, Asn172, Asn216, and Asn239. In terms of domain architecture, Ig-like C2-type spans 156 to 243 (PAPPSCSFQG…GFAQCNVTLD (88 aa)). A disulfide bond links Cys177 and Cys227. Residues 252 to 272 (VVAGAVVGTFVGLVLIAGLVL) traverse the membrane as a helical segment. Residues 273-394 (LYQRRSKTLE…PAQSQAGSLV (122 aa)) are Cytoplasmic-facing. A disordered region spans residues 300–372 (WTKGSDTISK…SLTPGGVSSS (73 aa)). 2 stretches are compositionally biased toward polar residues: residues 303–318 (GSDT…SVTS) and 335–347 (FTPT…QALS). Phosphoserine is present on Ser304. Residues Thr336 and Thr338 each carry the phosphothreonine modification. Phosphoserine is present on residues Ser340, Ser343, and Ser348.

Interacts with MAGI1.

Its subcellular location is the cell junction. It is found in the adherens junction. The protein localises to the tight junction. The protein resides in the cell membrane. Its function is as follows. Can mediate aggregation most likely through a homophilic molecular interaction. This is Endothelial cell-selective adhesion molecule (Esam) from Rattus norvegicus (Rat).